Here is a 76-residue protein sequence, read N- to C-terminus: uncharacterized protein (76 aa).

Residues 20–42 (GIVWGPKLAPWGITLGLGAFYFF) traverse the membrane as a helical segment.

The protein localises to the membrane. This is an uncharacterized protein from Dictyostelium discoideum (Social amoeba).